The primary structure comprises 183 residues: MFSMVNGFRNYSQQAIQASRYIGQGFIVTLDHMNRLPMTIQYPYEKLVPSERFRGRIHFEFDKCIACEVCVRVCPINLPVVDWKFKKDIKKKQLKSYSIDFGVCIFCGNCVEYCPTNCLSMTEEYELSTYDRHELNYDQIALGRLPISIIEDRTIESISSFDFSSKKIMEEHSKSRTVTKFLD.

2 4Fe-4S ferredoxin-type domains span residues 55–84 (GRIHFEFDKCIACEVCVRVCPINLPVVDWK) and 95–124 (KSYSIDFGVCIFCGNCVEYCPTNCLSMTEE). Residues Cys-64, Cys-67, Cys-70, Cys-74, Cys-104, Cys-107, Cys-110, and Cys-114 each coordinate [4Fe-4S] cluster.

This sequence belongs to the complex I 23 kDa subunit family. In terms of assembly, NDH is composed of at least 16 different subunits, 5 of which are encoded in the nucleus. [4Fe-4S] cluster serves as cofactor.

The protein localises to the plastid. It is found in the chloroplast thylakoid membrane. It catalyses the reaction a plastoquinone + NADH + (n+1) H(+)(in) = a plastoquinol + NAD(+) + n H(+)(out). The enzyme catalyses a plastoquinone + NADPH + (n+1) H(+)(in) = a plastoquinol + NADP(+) + n H(+)(out). NDH shuttles electrons from NAD(P)H:plastoquinone, via FMN and iron-sulfur (Fe-S) centers, to quinones in the photosynthetic chain and possibly in a chloroplast respiratory chain. The immediate electron acceptor for the enzyme in this species is believed to be plastoquinone. Couples the redox reaction to proton translocation, and thus conserves the redox energy in a proton gradient. The chain is NAD(P)H-quinone oxidoreductase subunit I, chloroplastic from Anthoceros angustus (Hornwort).